The chain runs to 552 residues: uncharacterized protein (552 aa).

In terms of domain architecture, DhaL spans 8–200 (KLFAEMIIQG…LAIVYAGFLK (193 aa)).

This is an uncharacterized protein from Staphylococcus saprophyticus subsp. saprophyticus (strain ATCC 15305 / DSM 20229 / NCIMB 8711 / NCTC 7292 / S-41).